Here is a 143-residue protein sequence, read N- to C-terminus: Histone H2B.2, sperm (143 aa).

The disordered stretch occupies residues 1–52 (MPRSPSKSSPRKGSPRKGSPRKGSPKRGGKGAKRAGKGGRRRNVVKRRRRRR). 5 short sequence motifs (SPKK motif) span residues 4–7 (SPSK), 9–12 (SPRK), 14–17 (SPRK), 19–22 (SPRK), and 24–27 (SPKR). Residues 9-52 (SPRKGSPRKGSPRKGSPKRGGKGAKRAGKGGRRRNVVKRRRRRR) show a composition bias toward basic residues. Serine 14, serine 19, and serine 24 each carry phosphoserine. An O-linked (GlcNAc) serine glycan is attached at serine 130. A Glycyl lysine isopeptide (Lys-Gly) (interchain with G-Cter in ubiquitin) cross-link involves residue lysine 138.

The protein belongs to the histone H2B family. As to quaternary structure, the nucleosome is a histone octamer containing two molecules each of H2A, H2B, H3 and H4 assembled in one H3-H4 heterotetramer and two H2A-H2B heterodimers. The octamer wraps approximately 147 bp of DNA. In terms of processing, monoubiquitination of Lys-138 gives a specific tag for epigenetic transcriptional activation and is also prerequisite for histone H3 'Lys-4' and 'Lys-79' methylation. Post-translationally, phosphorylated on SPKK motifs 3, 4 and 5; which may regulate DNA binding. Dephosphorylated during maturation of spermatids to mature sperm and rephosphorylated at fertilization. GlcNAcylation at Ser-130 promotes monoubiquitination of Lys-138. It fluctuates in response to extracellular glucose, and associates with transcribed genes. Testis-specific.

It is found in the nucleus. The protein resides in the chromosome. Core component of nucleosome. Nucleosomes wrap and compact DNA into chromatin, limiting DNA accessibility to the cellular machineries which require DNA as a template. Histones thereby play a central role in transcription regulation, DNA repair, DNA replication and chromosomal stability. DNA accessibility is regulated via a complex set of post-translational modifications of histones, also called histone code, and nucleosome remodeling. This chain is Histone H2B.2, sperm, found in Lytechinus pictus (Painted sea urchin).